Reading from the N-terminus, the 318-residue chain is Acetyl-coenzyme A carboxylase carboxyl transferase subunit alpha (318 aa).

The 254-residue stretch at 39–292 (LSDKAERQLR…GAAIAETLPG (254 aa)) folds into the CoA carboxyltransferase C-terminal domain.

Belongs to the AccA family. Acetyl-CoA carboxylase is a heterohexamer composed of biotin carboxyl carrier protein (AccB), biotin carboxylase (AccC) and two subunits each of ACCase subunit alpha (AccA) and ACCase subunit beta (AccD).

It localises to the cytoplasm. The enzyme catalyses N(6)-carboxybiotinyl-L-lysyl-[protein] + acetyl-CoA = N(6)-biotinyl-L-lysyl-[protein] + malonyl-CoA. Its pathway is lipid metabolism; malonyl-CoA biosynthesis; malonyl-CoA from acetyl-CoA: step 1/1. In terms of biological role, component of the acetyl coenzyme A carboxylase (ACC) complex. First, biotin carboxylase catalyzes the carboxylation of biotin on its carrier protein (BCCP) and then the CO(2) group is transferred by the carboxyltransferase to acetyl-CoA to form malonyl-CoA. This Acidiphilium cryptum (strain JF-5) protein is Acetyl-coenzyme A carboxylase carboxyl transferase subunit alpha.